The following is a 216-amino-acid chain: MTSALHHIPHRTKKLPPLRVGIGGPVGSGKTTLLEMLCKAMRDKYDLVAITNDIYTKEDQRLLTVAGALPAERIMGVETGGCPHTAIREDASINLEAIDRMLEDFPDADVVFVESGGDNLAATFSPELSDLTIYVIDVAAGEKIPRKGGPGITKSDLFVINKTDLAPYVGANLDVMEQDTQRMRRQRPYVMTNLKTHTGVAEVVAFIEKRGMLTAD.

Position 24–31 (24–31 (GPVGSGKT)) interacts with GTP.

The protein belongs to the SIMIBI class G3E GTPase family. UreG subfamily. As to quaternary structure, homodimer. UreD, UreF and UreG form a complex that acts as a GTP-hydrolysis-dependent molecular chaperone, activating the urease apoprotein by helping to assemble the nickel containing metallocenter of UreC. The UreE protein probably delivers the nickel.

The protein resides in the cytoplasm. In terms of biological role, facilitates the functional incorporation of the urease nickel metallocenter. This process requires GTP hydrolysis, probably effectuated by UreG. This chain is Urease accessory protein UreG, found in Variovorax paradoxus (strain S110).